Consider the following 242-residue polypeptide: MTISSNTALVLFSGGQDSATCLAWALSRFDRVETVGYAYGQRHAIELECRETLRNEMAAFSPDWKARLGEDHTIDLASLGALSETALTREAEIGLSENGLPNTFVPGRNIIFLTFAAALAARRNARHIVTGVCETDYSGYPDCRDDTIKALQVTLNLGMDQRFVLHTPLMWIDKAQTWDLTEELGGQKLVNLINRDSHSCYMGDRTHQHDWGYGCGTCPACNLRADGWRRYQQSRPSHGGAA.

12–22 (FSGGQDSATCL) contributes to the ATP binding site. Cys200, Cys215, Cys218, and Cys221 together coordinate Zn(2+).

This sequence belongs to the QueC family. The cofactor is Zn(2+).

It catalyses the reaction 7-carboxy-7-deazaguanine + NH4(+) + ATP = 7-cyano-7-deazaguanine + ADP + phosphate + H2O + H(+). Its pathway is purine metabolism; 7-cyano-7-deazaguanine biosynthesis. Its function is as follows. Catalyzes the ATP-dependent conversion of 7-carboxy-7-deazaguanine (CDG) to 7-cyano-7-deazaguanine (preQ(0)). The chain is 7-cyano-7-deazaguanine synthase from Gluconobacter oxydans (strain 621H) (Gluconobacter suboxydans).